The sequence spans 433 residues: Mitochondrial inner membrane magnesium transporter MIT1 (433 aa).

Residues 257–298 (TNKLLRDMMKIKNNLQKLSNLLNALRTNIEKILNNENDMKNM) are a coiled coil. A helical membrane pass occupies residues 360–380 (FILLNAKISFSTLLFSISSVV). At 381-396 (TSLFGMNLKNFVEDSN) the chain is on the extracellular side. A helical membrane pass occupies residues 397–417 (YAFIIVSIFVSVWSIIGIYVT). At 418-433 (KNINTLLKFFDRYNFR) the chain is on the mitochondrial matrix side.

Belongs to the CorA metal ion transporter (MIT) (TC 1.A.35) family.

The protein resides in the mitochondrion inner membrane. Its function is as follows. Mitochondrial inner membrane magnesium transporter required for mitochondrial magnesium homeostasis. Involved in the development of the sporozoite in the mosquito vector midgut. This is Mitochondrial inner membrane magnesium transporter MIT1 from Plasmodium berghei (strain Anka).